The chain runs to 397 residues: Succinyl-diaminopimelate desuccinylase (397 aa).

His-73 is a Zn(2+) binding site. Asp-75 is a catalytic residue. Position 106 (Asp-106) interacts with Zn(2+). Glu-140 serves as the catalytic Proton acceptor. The Zn(2+) site is built by Glu-141, Glu-169, and His-366.

The protein belongs to the peptidase M20A family. DapE subfamily. In terms of assembly, homodimer. Requires Zn(2+) as cofactor. Co(2+) serves as cofactor.

The catalysed reaction is N-succinyl-(2S,6S)-2,6-diaminopimelate + H2O = (2S,6S)-2,6-diaminopimelate + succinate. Its pathway is amino-acid biosynthesis; L-lysine biosynthesis via DAP pathway; LL-2,6-diaminopimelate from (S)-tetrahydrodipicolinate (succinylase route): step 3/3. Functionally, catalyzes the hydrolysis of N-succinyl-L,L-diaminopimelic acid (SDAP), forming succinate and LL-2,6-diaminopimelate (DAP), an intermediate involved in the bacterial biosynthesis of lysine and meso-diaminopimelic acid, an essential component of bacterial cell walls. The chain is Succinyl-diaminopimelate desuccinylase from Rhizobium johnstonii (strain DSM 114642 / LMG 32736 / 3841) (Rhizobium leguminosarum bv. viciae).